We begin with the raw amino-acid sequence, 256 residues long: Major prion protein (256 aa).

Positions 1–24 (MVKSHIGSWILVLFVAMWSDVGLC) are cleaved as a signal peptide. An interaction with GRB2, ERI3 and SYN1 region spans residues 25 to 233 (KKRPKPGGGW…ESQAYYQRGA (209 aa)). A disordered region spans residues 28–110 (PKPGGGWNTG…QWNKPSKPKT (83 aa)). 5 tandem repeats follow at residues 54–62 (PQGGGGWGQ), 63–70 (PHGGGWGQ), 71–78 (PHGGGWGQ), 79–86 (PHGGGWGQ), and 87–95 (PHGGGGWGQ). Positions 54–95 (PQGGGGWGQPHGGGWGQPHGGGWGQPHGGGWGQPHGGGGWGQ) are 5 X 8 AA tandem repeats of P-H-G-G-G-W-G-Q. The span at 55 to 97 (QGGGGWGQPHGGGWGQPHGGGWGQPHGGGWGQPHGGGGWGQGG) shows a compositional bias: gly residues. Cu(2+) is bound by residues H64, G65, G66, H72, G73, G74, H80, G81, G82, H88, G90, and G91. A disulfide bridge links C182 with C217. N-linked (GlcNAc...) asparagine glycans are attached at residues N184 and N200. A233 is lipidated: GPI-anchor amidated alanine. Residues 234-256 (SVILFSPPPVILLISFLIFLIVG) constitute a propeptide, removed in mature form.

Belongs to the prion family. In terms of assembly, monomer and homodimer. Has a tendency to aggregate into amyloid fibrils containing a cross-beta spine, formed by a steric zipper of superposed beta-strands. Soluble oligomers may represent an intermediate stage on the path to fibril formation. Copper binding may promote oligomerization. Interacts with GRB2, APP, ERI3/PRNPIP and SYN1. Mislocalized cytosolically exposed PrP interacts with MGRN1; this interaction alters MGRN1 subcellular location and causes lysosomal enlargement. Interacts with KIAA1191.

The protein resides in the cell membrane. The protein localises to the golgi apparatus. In terms of biological role, its primary physiological function is unclear. Has cytoprotective activity against internal or environmental stresses. May play a role in neuronal development and synaptic plasticity. May be required for neuronal myelin sheath maintenance. May play a role in iron uptake and iron homeostasis. Soluble oligomers are toxic to cultured neuroblastoma cells and induce apoptosis (in vitro). Association with GPC1 (via its heparan sulfate chains) targets PRNP to lipid rafts. Also provides Cu(2+) or Zn(2+) for the ascorbate-mediated GPC1 deaminase degradation of its heparan sulfate side chains. This Capra hircus (Goat) protein is Major prion protein (PRNP).